Reading from the N-terminus, the 201-residue chain is dCTP deaminase, dUMP-forming (201 aa).

Residues 117 to 122 (RSSFGR), Asp135, 143 to 145 (TLE), Gln163, Tyr177, and Gln188 contribute to the dCTP site. Glu145 functions as the Proton donor/acceptor in the catalytic mechanism.

Belongs to the dCTP deaminase family. In terms of assembly, homotrimer.

The enzyme catalyses dCTP + 2 H2O = dUMP + NH4(+) + diphosphate. Its pathway is pyrimidine metabolism; dUMP biosynthesis; dUMP from dCTP: step 1/1. Bifunctional enzyme that catalyzes both the deamination of dCTP to dUTP and the hydrolysis of dUTP to dUMP without releasing the toxic dUTP intermediate. The protein is dCTP deaminase, dUMP-forming of Methanococcus aeolicus (strain ATCC BAA-1280 / DSM 17508 / OCM 812 / Nankai-3).